We begin with the raw amino-acid sequence, 474 residues long: 3-isopropylmalate dehydratase large subunit (474 aa).

3 residues coordinate [4Fe-4S] cluster: cysteine 355, cysteine 415, and cysteine 418.

It belongs to the aconitase/IPM isomerase family. LeuC type 1 subfamily. As to quaternary structure, heterodimer of LeuC and LeuD. It depends on [4Fe-4S] cluster as a cofactor.

It catalyses the reaction (2R,3S)-3-isopropylmalate = (2S)-2-isopropylmalate. It participates in amino-acid biosynthesis; L-leucine biosynthesis; L-leucine from 3-methyl-2-oxobutanoate: step 2/4. Its function is as follows. Catalyzes the isomerization between 2-isopropylmalate and 3-isopropylmalate, via the formation of 2-isopropylmaleate. The polypeptide is 3-isopropylmalate dehydratase large subunit (Shewanella sp. (strain MR-7)).